Consider the following 165-residue polypeptide: K(+)/H(+) antiporter subunit KhtT (165 aa).

In terms of domain architecture, RCK C-terminal spans 76-161 (LESIEMAFSD…LKKLIHDFLS (86 aa)).

As to quaternary structure, the transporter is composed of the integral membrane protein KhtU and the regulatory protein KhtT.

The protein localises to the cell membrane. Binds cyclic di-AMP (c-di-AMP), which may regulate the activity. Required for activity of the potassium/proton antiporter KhtU. Involved in protection of the cell from methylglyoxal, a toxic by-product of glycolysis. This chain is K(+)/H(+) antiporter subunit KhtT, found in Bacillus subtilis (strain 168).